Here is a 282-residue protein sequence, read N- to C-terminus: Phosphatidylserine decarboxylase proenzyme (282 aa).

Catalysis depends on charge relay system; for autoendoproteolytic cleavage activity residues aspartate 85, histidine 142, and serine 244. Catalysis depends on serine 244, which acts as the Schiff-base intermediate with substrate; via pyruvic acid; for decarboxylase activity. Residue serine 244 is modified to Pyruvic acid (Ser); by autocatalysis.

The protein belongs to the phosphatidylserine decarboxylase family. PSD-B subfamily. Prokaryotic type I sub-subfamily. As to quaternary structure, heterodimer of a large membrane-associated beta subunit and a small pyruvoyl-containing alpha subunit. It depends on pyruvate as a cofactor. Post-translationally, is synthesized initially as an inactive proenzyme. Formation of the active enzyme involves a self-maturation process in which the active site pyruvoyl group is generated from an internal serine residue via an autocatalytic post-translational modification. Two non-identical subunits are generated from the proenzyme in this reaction, and the pyruvate is formed at the N-terminus of the alpha chain, which is derived from the carboxyl end of the proenzyme. The autoendoproteolytic cleavage occurs by a canonical serine protease mechanism, in which the side chain hydroxyl group of the serine supplies its oxygen atom to form the C-terminus of the beta chain, while the remainder of the serine residue undergoes an oxidative deamination to produce ammonia and the pyruvoyl prosthetic group on the alpha chain. During this reaction, the Ser that is part of the protease active site of the proenzyme becomes the pyruvoyl prosthetic group, which constitutes an essential element of the active site of the mature decarboxylase.

It localises to the cell membrane. It carries out the reaction a 1,2-diacyl-sn-glycero-3-phospho-L-serine + H(+) = a 1,2-diacyl-sn-glycero-3-phosphoethanolamine + CO2. It functions in the pathway phospholipid metabolism; phosphatidylethanolamine biosynthesis; phosphatidylethanolamine from CDP-diacylglycerol: step 2/2. Functionally, catalyzes the formation of phosphatidylethanolamine (PtdEtn) from phosphatidylserine (PtdSer). In Coxiella burnetii (strain CbuG_Q212) (Coxiella burnetii (strain Q212)), this protein is Phosphatidylserine decarboxylase proenzyme.